The primary structure comprises 1076 residues: MSSAEIIGSTNLIILLEDEVFADFFNTFLSLPVFGQTPFYTVENSQWSLWPEIPCNLIAKYKGLLTWLEKCRLPFFCKTNLCFHYILCQEFISFIKSPEGGEELVDFWILAENILSIDEMDLEVRDYYLSLLLMLRATHLQEGSRVVTLCNMNIKSLLNLSIWHPNQSTTRREILSHMQKVALFKLQSYWLPNFYTHTKMTMAKEEACHGLMQEYETRLYSVCYTHIGGLPLNMSIKKCHHFQKRYSSRKAKRKMWQLVDPDSWSLEMDLKPDAIGMPLQETCPQEKVVIQMPSLKMASSKETRISSLEKDMHYAKISSMENKAKSHLHMEAPFETKVSTHLRTVIPIVNHSSKMTIQKAIKQSFSLGYIHLALCADACAGNPFRDHLKKLNLKVEIQLLDLWQDLQHFLSVLLNNKKNGNAIFRHLLGDRICELYLNEQIGPCLPLKSQTIQGLKELLPSGDVIPWIPKAQKEICKMLSPWYDEFLDEEDYWFLLFTTQNRFISSRQHKREFIGKEENILLYKRIQQSLELSQALADMKEMDYRQWRKIATEDLKQGGSLQVELTSPVFLTDITKMSFEELCYKNPKMAIQKISDDYKIYCEKAPKIDFKMEIIKETKTVSRSNRKMSLLKRTLVRKPSMRPRNLTEVLLNTQHLEFFREFLKERKAKIPLQFLTAVQKISIETNEKICKSLIENVIKTFFQGQLSPEEMLQCDAPIIKEIASMRHVTTSTLLTLQGHVMKSIEEKWFKDYQDLFPPHHQEVEVQSEVQISSRKPSKIVSTYLQESQKKGWMRMISFIRSFCKYRRFMLNPSKRQEFEDYLHQEMQNSKENFTTAHNTSGRSAPPSTNVRSADQENGEITLVKRRIFGHRIITVNFAINDLYFFSEMEKFNDLVSSAHMLQVNRAYNENDVILMRSKMNIIQKLFLNSDIPPKLRVNVPEFQKDAILAAITEGYLDRSVFHGAIMSVFPVVMYFWKRFCFWKATRSYLQYRGKKFKDRKSPPKSTDKYPFSSGGDNAILRFTLLRGIEWLQPQREAISSVQNSSSSKLTQPRLVVSAMQLHPVQGQKLSYIKKEK.

The RGS domain maps to 645 to 764 (NLTEVLLNTQ…LFPPHHQEVE (120 aa)). A compositionally biased stretch (polar residues) spans 834–852 (TTAHNTSGRSAPPSTNVRS). Residues 834–854 (TTAHNTSGRSAPPSTNVRSAD) are disordered. A helical membrane pass occupies residues 960–982 (VFHGAIMSVFPVVMYFWKRFCFW).

It is found in the membrane. The sequence is that of Regulator of G-protein signaling protein-like (RGSL1) from Homo sapiens (Human).